Here is a 150-residue protein sequence, read N- to C-terminus: Deoxyuridine 5'-triphosphate nucleotidohydrolase (150 aa).

Residues 69–71, Asn82, 86–88, and Met96 each bind substrate; these read RSG and LID.

This sequence belongs to the dUTPase family. The cofactor is Mg(2+).

It carries out the reaction dUTP + H2O = dUMP + diphosphate + H(+). Its pathway is pyrimidine metabolism; dUMP biosynthesis; dUMP from dCTP (dUTP route): step 2/2. Its function is as follows. This enzyme is involved in nucleotide metabolism: it produces dUMP, the immediate precursor of thymidine nucleotides and it decreases the intracellular concentration of dUTP so that uracil cannot be incorporated into DNA. The chain is Deoxyuridine 5'-triphosphate nucleotidohydrolase from Acinetobacter baumannii (strain AB307-0294).